A 369-amino-acid polypeptide reads, in one-letter code: NADH-quinone oxidoreductase subunit H (369 aa).

The next 8 helical transmembrane spans lie at 20 to 40 (VLLI…AYLV), 88 to 108 (ICFL…WAVI), 133 to 153 (IGVL…IIAG), 179 to 199 (IGLT…GEIV), 205 to 225 (MPYW…ISSL), 267 to 287 (ILIN…PLNI), 293 to 313 (IPGI…FIWI), and 328 to 348 (LGWK…SGVL).

It belongs to the complex I subunit 1 family. In terms of assembly, NDH-1 is composed of 14 different subunits. Subunits NuoA, H, J, K, L, M, N constitute the membrane sector of the complex.

It localises to the cell inner membrane. The enzyme catalyses a quinone + NADH + 5 H(+)(in) = a quinol + NAD(+) + 4 H(+)(out). Functionally, NDH-1 shuttles electrons from NADH, via FMN and iron-sulfur (Fe-S) centers, to quinones in the respiratory chain. The immediate electron acceptor for the enzyme in this species is believed to be ubiquinone. Couples the redox reaction to proton translocation (for every two electrons transferred, four hydrogen ions are translocated across the cytoplasmic membrane), and thus conserves the redox energy in a proton gradient. This subunit may bind ubiquinone. The sequence is that of NADH-quinone oxidoreductase subunit H from Ehrlichia canis (strain Jake).